The following is a 302-amino-acid chain: Tegument protein VP22 (302 aa).

A compositionally biased stretch (basic and acidic residues) spans 1–10; it reads MASSDGDRLC. Disordered stretches follow at residues 1-42 and 125-167; these read MASS…PDDS and SFTK…TATS. The interval 154–244 is interaction with gE; it reads RPISFSTAPK…ANEADLGEGA (91 aa). Over residues 157 to 167 the composition is skewed to polar residues; that stretch reads SFSTAPKTATS. A Nuclear export signal motif is present at residues 212-224; the sequence is LDRLLTGAVIRIT. Residues 243–302 form a disordered region; it reads GASVSKRGHNRKTGDLQGGMGNEPMYAQVRKPKSRTDTQTTGRITNRSRARSASRTDARK.

This sequence belongs to the alphaherpesvirinae VP22 tegument protein family. Interacts with gE (via C-terminus); this interaction is necessary for the recruitment of VP22/ORF9 to the Golgi and its packaging into virions. Interacts with gM (via C-terminus). Interacts with VP16/ORF10; this interaction allows the formation of a tripartite complex composed of VP16/ORF10, VP22/ORF9 and VHS/ORF17. Interacts with the capsid-binding protein ORF44. Interacts with host CGAS. Highly phosphorylated in the host cell. Packaging is selective for underphosphorylated forms.

It localises to the virion tegument. Its subcellular location is the host cytoplasm. The protein localises to the host nucleus. It is found in the host Golgi apparatus. Its function is as follows. Tegument protein that plays different roles during the time course of infection. Participates in both the accumulation of viral mRNAs and viral protein translation at late time of infection. Modulates the RNase activity of the virion host shutoff protein ORF17 probably to ensure necessary levels of key cellular mRNAs and proteins. Plays a role in microtubule reorganization that occurs after viral infection by stabilizing microtubule network. Plays a role in the inhibition of host innate immune system by targeting the CGAS enzymatic activity which is the principal cytosolic DNA sensor that detects invading viral DNA. Acts by mediating disruption of liquid-like droplets in which CGAS is activated, thereby preventing CGAS activity. The protein is Tegument protein VP22 of Varicella-zoster virus (strain Oka vaccine) (HHV-3).